A 369-amino-acid chain; its full sequence is Nuclear hormone receptor family member nhr-64 (369 aa).

Positions 67–142 form a DNA-binding region, nuclear receptor; it reads EKCQVDKAKR…ASTRGLRTTV (76 aa). 2 NR C4-type zinc fingers span residues 70 to 90 and 106 to 130; these read QVDK…CLRK and PANP…TLIR. The NR LBD domain occupies 120 to 352; the sequence is PDDPLLDTLI…NLMLELMLPN (233 aa).

It belongs to the nuclear hormone receptor family.

The protein localises to the nucleus. Functionally, orphan nuclear receptor. This Caenorhabditis elegans protein is Nuclear hormone receptor family member nhr-64 (nhr-64).